Consider the following 304-residue polypeptide: MATH domain and coiled-coil domain-containing protein At2g42470 (304 aa).

An MATH domain is found at 6–123; the sequence is QTSFTFEIDN…NNKLIIEVQV (118 aa). Positions 219–292 form a coiled coil; sequence FKVDWLKKKL…LKIELDRTRR (74 aa).

The polypeptide is MATH domain and coiled-coil domain-containing protein At2g42470 (Arabidopsis thaliana (Mouse-ear cress)).